A 35-amino-acid polypeptide reads, in one-letter code: Pheromone-binding protein 1 (35 aa).

The protein belongs to the PBP/GOBP family. In terms of assembly, homodimer. As to expression, antenna.

In terms of biological role, this major soluble protein in olfactory sensilla of male moths might serve to solubilize the extremely hydrophobic pheromone molecules and to transport pheromone through the aqueous lymph to receptors located on olfactory cilia. The protein is Pheromone-binding protein 1 of Lymantria dispar (Gypsy moth).